The primary structure comprises 709 residues: Elongation factor G (709 aa).

In terms of domain architecture, tr-type G spans 9–295 (AKVRNIGIMA…AVVRYLPTPL (287 aa)). GTP is bound by residues 18 to 25 (AHIDAGKT), 86 to 90 (DTPGH), and 140 to 143 (NKLD).

Belongs to the TRAFAC class translation factor GTPase superfamily. Classic translation factor GTPase family. EF-G/EF-2 subfamily.

Its subcellular location is the cytoplasm. Catalyzes the GTP-dependent ribosomal translocation step during translation elongation. During this step, the ribosome changes from the pre-translocational (PRE) to the post-translocational (POST) state as the newly formed A-site-bound peptidyl-tRNA and P-site-bound deacylated tRNA move to the P and E sites, respectively. Catalyzes the coordinated movement of the two tRNA molecules, the mRNA and conformational changes in the ribosome. This is Elongation factor G from Streptomyces avermitilis (strain ATCC 31267 / DSM 46492 / JCM 5070 / NBRC 14893 / NCIMB 12804 / NRRL 8165 / MA-4680).